Consider the following 117-residue polypeptide: Large ribosomal subunit protein bL20 (117 aa).

Belongs to the bacterial ribosomal protein bL20 family.

Functionally, binds directly to 23S ribosomal RNA and is necessary for the in vitro assembly process of the 50S ribosomal subunit. It is not involved in the protein synthesizing functions of that subunit. This Limosilactobacillus fermentum (strain NBRC 3956 / LMG 18251) (Lactobacillus fermentum) protein is Large ribosomal subunit protein bL20.